Here is a 202-residue protein sequence, read N- to C-terminus: Holliday junction branch migration complex subunit RuvA (202 aa).

The domain I stretch occupies residues 1-63 (MIASLRGTVL…EDSMTLYGFT (63 aa)). The domain II stretch occupies residues 64–142 (SQDDRDMFHV…AFAPAESADL (79 aa)). Residues 143-148 (SSAAPA) form a flexible linker region. The interval 149 to 202 (AAGPVVEDVVEALIGLGFTDKMARPVVESVVAEQPDAATPVVLRAALSQLGAKK) is domain III.

The protein belongs to the RuvA family. Homotetramer. Forms an RuvA(8)-RuvB(12)-Holliday junction (HJ) complex. HJ DNA is sandwiched between 2 RuvA tetramers; dsDNA enters through RuvA and exits via RuvB. An RuvB hexamer assembles on each DNA strand where it exits the tetramer. Each RuvB hexamer is contacted by two RuvA subunits (via domain III) on 2 adjacent RuvB subunits; this complex drives branch migration. In the full resolvosome a probable DNA-RuvA(4)-RuvB(12)-RuvC(2) complex forms which resolves the HJ.

The protein localises to the cytoplasm. The RuvA-RuvB-RuvC complex processes Holliday junction (HJ) DNA during genetic recombination and DNA repair, while the RuvA-RuvB complex plays an important role in the rescue of blocked DNA replication forks via replication fork reversal (RFR). RuvA specifically binds to HJ cruciform DNA, conferring on it an open structure. The RuvB hexamer acts as an ATP-dependent pump, pulling dsDNA into and through the RuvAB complex. HJ branch migration allows RuvC to scan DNA until it finds its consensus sequence, where it cleaves and resolves the cruciform DNA. In Corynebacterium aurimucosum (strain ATCC 700975 / DSM 44827 / CIP 107346 / CN-1) (Corynebacterium nigricans), this protein is Holliday junction branch migration complex subunit RuvA.